Reading from the N-terminus, the 240-residue chain is Adenosine 5'-phosphosulfate reductase (240 aa).

Cys-125, Cys-126, Cys-208, and Cys-211 together coordinate [4Fe-4S] cluster. Residue Cys-234 is the Nucleophile; cysteine thiosulfonate intermediate of the active site.

Belongs to the PAPS reductase family. CysH subfamily. It depends on [4Fe-4S] cluster as a cofactor.

It localises to the cytoplasm. The catalysed reaction is [thioredoxin]-disulfide + sulfite + AMP + 2 H(+) = adenosine 5'-phosphosulfate + [thioredoxin]-dithiol. The protein operates within sulfur metabolism; hydrogen sulfide biosynthesis; sulfite from sulfate. Its function is as follows. Catalyzes the formation of sulfite from adenosine 5'-phosphosulfate (APS) using thioredoxin as an electron donor. The polypeptide is Adenosine 5'-phosphosulfate reductase (Oceanobacillus iheyensis (strain DSM 14371 / CIP 107618 / JCM 11309 / KCTC 3954 / HTE831)).